A 228-amino-acid chain; its full sequence is MQKLKQQVFEANMELPRYGLVTFTWGNVSAIDRERGLVVIKPSGVAYETMKADDMVVVDMSGNVVEGEYRPSSDTATHLELYRRYPSLGGIVHTHSTHATAWAQAGLAIPALGTTHADYFFGDIPCTRGLSEEEVQGEYELNTGKVIIETLGDAEPLHTPGIVVYQHGPFAWGKDAHDAVHNAVVMEEVAKMAWIARSINPQLNHIDSFLMNKHFMRKHGPNAYYGQK.

Residues glycine 26–asparagine 27, serine 43–glycine 44, and serine 72–serine 73 contribute to the substrate site. Residues aspartate 74, histidine 93, and histidine 95 each contribute to the Zn(2+) site. Residue aspartate 118 is the Proton donor/acceptor of the active site. Residue histidine 167 participates in Zn(2+) binding. Catalysis depends on tyrosine 225, which acts as the Proton donor/acceptor.

The protein belongs to the aldolase class II family. AraD/FucA subfamily. Requires Zn(2+) as cofactor.

The catalysed reaction is L-ribulose 5-phosphate = D-xylulose 5-phosphate. The protein operates within cofactor degradation; L-ascorbate degradation; D-xylulose 5-phosphate from L-ascorbate: step 4/4. Functionally, catalyzes the isomerization of L-ribulose 5-phosphate to D-xylulose 5-phosphate. Is involved in the anaerobic L-ascorbate utilization. The protein is L-ribulose-5-phosphate 4-epimerase UlaF of Escherichia coli O81 (strain ED1a).